Here is a 355-residue protein sequence, read N- to C-terminus: Protein ATP1B4 (355 aa).

The Nuclear segment spans residues 1-108 (MRRQLRSRRA…SLARTGQSLS (108 aa)). The disordered stretch occupies residues 35–76 (EEEEAEEARVMVVPDLEEEEKEEEEEKEEDEKEEEESHHQDT). Residues 49–68 (DLEEEEKEEEEEKEEDEKEE) are compositionally biased toward acidic residues. Residues 109–129 (LLLVIYFFFYASLAAVITLCM) form a helical; Signal-anchor for type II membrane protein membrane-spanning segment. The Perinuclear space segment spans residues 130–355 (YTLFLTISPY…RVIFTLNIET (226 aa)).

This sequence belongs to the X(+)/potassium ATPases subunit beta family. In terms of assembly, associates with a SMAD7-transcriptional complex. Interacts with SNW1 and TOR1AIP1. Does not associate with known Na,K-ATPase alpha-subunits. As to expression, expressed in skeletal muscle (at protein level). Expressed during postnatal development in skeletal muscle and heart.

The protein resides in the nucleus inner membrane. In terms of biological role, may act as a transcriptional coregulator during muscle development through its interaction with SNW1. Has lost its ancestral function as a Na,K-ATPase beta-subunit. This is Protein ATP1B4 (ATP1B4) from Sus scrofa (Pig).